Reading from the N-terminus, the 592-residue chain is Probable tubulin polyglutamylase TTLL2 (592 aa).

Disordered stretches follow at residues 1–23 (MRGRDLCSSTQSQALGSLRTTTP) and 51–77 (GVSIPPRRGRPTPTLEKKKKPHLMAED). The span at 7 to 23 (CSSTQSQALGSLRTTTP) shows a compositional bias: polar residues. The 344-residue stretch at 84–427 (LKPLVFRVDE…NGLRNEGREA (344 aa)) folds into the TTL domain. ATP contacts are provided by residues lysine 212, 218 to 219 (RG), 240 to 243 (QKYI), and 253 to 255 (KCD). An a protein-binding site is contributed by arginine 218. Residue arginine 279 participates in L-glutamate binding. 298–299 (TN) serves as a coordination point for ATP. L-glutamate is bound by residues serine 301 and lysine 321. Mg(2+) is bound by residues aspartate 373, glutamate 386, and asparagine 388. Residue lysine 404 participates in L-glutamate binding.

The protein belongs to the tubulin--tyrosine ligase family. Mg(2+) serves as cofactor. Testis.

Its function is as follows. Probable tubulin polyglutamylase that generates side chains of glutamate on the gamma-carboxyl group of specific glutamate residues within the C-terminal tail of target proteins. Similar to TTLL1, may acquire enzymatic activity only in complex with other proteins as it is most likely lacking domains important for autonomous activity. Probably involved in the side-chain initiation step of the polyglutamylation reaction rather than the elongation step. This Homo sapiens (Human) protein is Probable tubulin polyglutamylase TTLL2.